Reading from the N-terminus, the 94-residue chain is YcgL domain-containing protein VP0875 (94 aa).

The region spanning 1–84 (MLCSIYKSSK…PPENLLEKYK (84 aa)) is the YcgL domain.

The polypeptide is YcgL domain-containing protein VP0875 (Vibrio parahaemolyticus serotype O3:K6 (strain RIMD 2210633)).